A 436-amino-acid chain; its full sequence is Histidine--tRNA ligase (436 aa).

The protein belongs to the class-II aminoacyl-tRNA synthetase family.

It is found in the cytoplasm. It carries out the reaction tRNA(His) + L-histidine + ATP = L-histidyl-tRNA(His) + AMP + diphosphate + H(+). This chain is Histidine--tRNA ligase, found in Thermococcus kodakarensis (strain ATCC BAA-918 / JCM 12380 / KOD1) (Pyrococcus kodakaraensis (strain KOD1)).